An 829-amino-acid polypeptide reads, in one-letter code: Isethionate sulfite-lyase (829 aa).

A PFL domain is found at 31–699 (ERVFNILDSF…VVSATPNGRL (669 aa)). 2-hydroxyethane-1-sulfonate-binding positions include Arg-188, Gln-192, 467-469 (CTE), and Arg-677. The active-site Cysteine radical intermediate is Cys-467. The Proton acceptor role is filled by Glu-469. A Glycine radical domain is found at 706-829 (DGSSASHGAD…LIARTQHDAM (124 aa)). Position 804 is a glycine radical (Gly-804).

It belongs to the glycyl radical enzyme (GRE) family. In terms of assembly, homodimer. Requires the activating protein IslB to generate the key active site glycyl radical on Gly-804 that is involved in catalysis.

It catalyses the reaction 2-hydroxyethane-1-sulfonate = acetaldehyde + sulfite + H(+). It functions in the pathway organosulfur degradation; alkanesulfonate degradation. Involved in an anaerobic respiration pathway that converts the sulfonate isethionate (2-hydroxyethanesulfonate) to ammonia, acetate and sulfide. Catalyzes the radical-mediated C-S bond cleavage of isethionate (2-hydroxyethanesulfonate) to form sulfite and acetaldehyde. The protein is Isethionate sulfite-lyase of Oleidesulfovibrio alaskensis (strain ATCC BAA-1058 / DSM 17464 / G20) (Desulfovibrio alaskensis).